The primary structure comprises 614 residues: 2-succinyl-5-enolpyruvyl-6-hydroxy-3-cyclohexene-1-carboxylate synthase (614 aa).

Belongs to the TPP enzyme family. MenD subfamily. In terms of assembly, homodimer. The cofactor is Mg(2+). It depends on Mn(2+) as a cofactor. Thiamine diphosphate serves as cofactor.

The catalysed reaction is isochorismate + 2-oxoglutarate + H(+) = 5-enolpyruvoyl-6-hydroxy-2-succinyl-cyclohex-3-ene-1-carboxylate + CO2. Its pathway is quinol/quinone metabolism; 1,4-dihydroxy-2-naphthoate biosynthesis; 1,4-dihydroxy-2-naphthoate from chorismate: step 2/7. The protein operates within quinol/quinone metabolism; menaquinone biosynthesis. Catalyzes the thiamine diphosphate-dependent decarboxylation of 2-oxoglutarate and the subsequent addition of the resulting succinic semialdehyde-thiamine pyrophosphate anion to isochorismate to yield 2-succinyl-5-enolpyruvyl-6-hydroxy-3-cyclohexene-1-carboxylate (SEPHCHC). This Sorangium cellulosum (strain So ce56) (Polyangium cellulosum (strain So ce56)) protein is 2-succinyl-5-enolpyruvyl-6-hydroxy-3-cyclohexene-1-carboxylate synthase.